The sequence spans 430 residues: Enolase (430 aa).

A (2R)-2-phosphoglycerate-binding site is contributed by Gln-166. Catalysis depends on Glu-208, which acts as the Proton donor. 3 residues coordinate Mg(2+): Asp-245, Glu-288, and Asp-315. Residues Lys-340, Arg-369, Ser-370, and Lys-391 each contribute to the (2R)-2-phosphoglycerate site. The active-site Proton acceptor is the Lys-340.

Belongs to the enolase family. Mg(2+) serves as cofactor.

It localises to the cytoplasm. The protein resides in the secreted. It is found in the cell surface. The catalysed reaction is (2R)-2-phosphoglycerate = phosphoenolpyruvate + H2O. Its pathway is carbohydrate degradation; glycolysis; pyruvate from D-glyceraldehyde 3-phosphate: step 4/5. Catalyzes the reversible conversion of 2-phosphoglycerate (2-PG) into phosphoenolpyruvate (PEP). It is essential for the degradation of carbohydrates via glycolysis. This is Enolase from Clostridium beijerinckii (strain ATCC 51743 / NCIMB 8052) (Clostridium acetobutylicum).